A 502-amino-acid polypeptide reads, in one-letter code: Glycerol kinase (502 aa).

Thr14 lines the ADP pocket. 3 residues coordinate ATP: Thr14, Thr15, and Ser16. Thr14 provides a ligand contact to sn-glycerol 3-phosphate. Arg18 contacts ADP. 3 residues coordinate sn-glycerol 3-phosphate: Arg84, Glu85, and Tyr136. Residues Arg84, Glu85, and Tyr136 each contribute to the glycerol site. Phosphohistidine; by HPr is present on His232. Asp246 serves as a coordination point for sn-glycerol 3-phosphate. Positions 246 and 247 each coordinate glycerol. ADP-binding residues include Thr268 and Gly311. The ATP site is built by Thr268, Gly311, Gln315, and Gly412. 2 residues coordinate ADP: Gly412 and Asn416.

The protein belongs to the FGGY kinase family. Homotetramer and homodimer (in equilibrium). Post-translationally, the phosphoenolpyruvate-dependent sugar phosphotransferase system (PTS), including enzyme I, and histidine-containing protein (HPr) are required for the phosphorylation, which leads to the activation of the enzyme.

It catalyses the reaction glycerol + ATP = sn-glycerol 3-phosphate + ADP + H(+). It functions in the pathway polyol metabolism; glycerol degradation via glycerol kinase pathway; sn-glycerol 3-phosphate from glycerol: step 1/1. Activated by phosphorylation and inhibited by fructose 1,6-bisphosphate (FBP). In terms of biological role, key enzyme in the regulation of glycerol uptake and metabolism. Catalyzes the phosphorylation of glycerol to yield sn-glycerol 3-phosphate. This chain is Glycerol kinase, found in Streptococcus pneumoniae (strain P1031).